Consider the following 226-residue polypeptide: Peptidyl-prolyl cis-trans isomerase CYP23 (226 aa).

The first 22 residues, 1–22, serve as a signal peptide directing secretion; it reads MGITRNLILGLACLAFVSIAKA. Residues 34 to 191 enclose the PPIase cyclophilin-type domain; it reads VVFQTSYGDI…ERITILSTYY (158 aa).

The protein belongs to the cyclophilin-type PPIase family. Ubiquitous. Lower expression in roots.

The protein localises to the endoplasmic reticulum. The catalysed reaction is [protein]-peptidylproline (omega=180) = [protein]-peptidylproline (omega=0). Its function is as follows. PPIases accelerate the folding of proteins. It catalyzes the cis-trans isomerization of proline imidic peptide bonds in oligopeptides. This is Peptidyl-prolyl cis-trans isomerase CYP23 (CYP23) from Arabidopsis thaliana (Mouse-ear cress).